Consider the following 541-residue polypeptide: 1'-carboxy-chondrochloren decarboxylase (541 aa).

The FAD-binding PCMH-type domain occupies 39–226 (TTHRIPAIIS…TRMTIWLAPR (188 aa)).

The enzyme catalyses 1'-carboxy-chondrochloren A + FAD + 2 H(+) = chondrochloren A + FADH2 + CO2. It catalyses the reaction 1'-carboxy-chondrochloren B + FAD + 2 H(+) = chondrochloren B + FADH2 + CO2. It participates in antibiotic biosynthesis. With respect to regulation, activity is not affected by the addition of EDTA or/and EGTA chelators or in the presence of external metals like Zn(2+), Mg(2+), Mn(2+) and Fe(2+). Activity is inhibited under low oxygen conditions. Functionally, oxidative decarboxylase involved in the biosynthesis of the antibiotics chondrochloren A and chondrochloren B. Catalyzes the decarboxylation of biologically inactive pre-chondrochloren A and pre-chondrochloren B to yield mature chondrochloren A and chondrochloren B, respectively. Cannot decarboxylate free L-tyrosine, 3-chloro-tyrosine or a number of chlorinated and non-chlorinated analog substrates containing variable N-acyl chains. This chain is 1'-carboxy-chondrochloren decarboxylase, found in Chondromyces crocatus.